We begin with the raw amino-acid sequence, 186 residues long: Myosin light chain 1, skeletal muscle isoform (186 aa).

Methionine 1 is modified (blocked amino end (Met)). The disordered stretch occupies residues 1 to 26; sequence MPKAPAKKAEPAPAPAPAPEPAPAPA. Positions 12–26 are enriched in pro residues; the sequence is APAPAPAPEPAPAPA. EF-hand domains follow at residues 42 to 77 and 119 to 154; these read DQIEDYREAFGLFDRVGDNKVAYNQIADIMRALGQN and AGFEDYVEGLRVFDKEGNGTVMGAELRIVLSTLGEK.

As to quaternary structure, myosin is a hexamer of 2 heavy chains and 4 light chains.

In Chelon ramada (Thin-lipped grey mullet), this protein is Myosin light chain 1, skeletal muscle isoform.